A 108-amino-acid chain; its full sequence is MSRFVSAALVGAALLVSGNAFAYDAAAGKATYDASCATCHKTGMMGAPKVGDKAAWAPRIAQGMNTLVSKSIKGYKGTKGMMPAKGGNAKLTDAQVGNAVAYMVGQSK.

A signal peptide spans 1 to 22; it reads MSRFVSAALVGAALLVSGNAFA. Residues Cys36, Cys39, His40, and Met82 each coordinate heme c.

In terms of processing, binds 1 heme c group covalently per subunit.

This basic c-type monoheme cytochrome has been found exclusively in the green photosynthetic bacteria, although its role in bacterial photosynthesis is not established. It has an unusually low redox potential compared with mitochondrial cytochrome c. It is reactive with cytochrome c oxidases but not with reductases. The sequence is that of Cytochrome c-555 from Chlorobaculum tepidum (strain ATCC 49652 / DSM 12025 / NBRC 103806 / TLS) (Chlorobium tepidum).